Here is a 266-residue protein sequence, read N- to C-terminus: tRNA pseudouridine synthase A (266 aa).

Catalysis depends on aspartate 56, which acts as the Nucleophile. Tyrosine 110 provides a ligand contact to substrate.

Belongs to the tRNA pseudouridine synthase TruA family.

It carries out the reaction uridine(38/39/40) in tRNA = pseudouridine(38/39/40) in tRNA. Functionally, formation of pseudouridine at positions 38, 39 and 40 in the anticodon stem and loop of transfer RNAs. The sequence is that of tRNA pseudouridine synthase A from Halobacterium salinarum (strain ATCC 29341 / DSM 671 / R1).